Here is a 277-residue protein sequence, read N- to C-terminus: Large ribosomal subunit protein uL2 (277 aa).

The segment at 222–277 is disordered; it reads GVAMNPVDHPHGGGEGRTSGGRHPVSPWGKPTKGKRTRSNKATDKFIMRTRHQRKK.

It belongs to the universal ribosomal protein uL2 family. In terms of assembly, part of the 50S ribosomal subunit. Forms a bridge to the 30S subunit in the 70S ribosome.

One of the primary rRNA binding proteins. Required for association of the 30S and 50S subunits to form the 70S ribosome, for tRNA binding and peptide bond formation. It has been suggested to have peptidyltransferase activity; this is somewhat controversial. Makes several contacts with the 16S rRNA in the 70S ribosome. This Bartonella tribocorum (strain CIP 105476 / IBS 506) protein is Large ribosomal subunit protein uL2.